The primary structure comprises 669 residues: Dymeclin (669 aa).

Gly-2 is lipidated: N-myristoyl glycine.

This sequence belongs to the dymeclin family. Interacts with GOLM1 and PPIB. Myristoylated in vitro; myristoylation is not essential for protein targeting to Golgi compartment.

The protein resides in the cytoplasm. The protein localises to the golgi apparatus. It is found in the membrane. In terms of biological role, necessary for correct organization of Golgi apparatus. Involved in bone development. This Pongo abelii (Sumatran orangutan) protein is Dymeclin (DYM).